A 143-amino-acid chain; its full sequence is Large ribosomal subunit protein uL11 (143 aa).

The protein belongs to the universal ribosomal protein uL11 family. In terms of assembly, part of the ribosomal stalk of the 50S ribosomal subunit. Interacts with L10 and the large rRNA to form the base of the stalk. L10 forms an elongated spine to which L12 dimers bind in a sequential fashion forming a multimeric L10(L12)X complex. One or more lysine residues are methylated.

In terms of biological role, forms part of the ribosomal stalk which helps the ribosome interact with GTP-bound translation factors. The protein is Large ribosomal subunit protein uL11 of Alkalilimnicola ehrlichii (strain ATCC BAA-1101 / DSM 17681 / MLHE-1).